Here is a 453-residue protein sequence, read N- to C-terminus: Tubulin delta chain (453 aa).

143 to 149 (AGGTGSG) contacts GTP.

Belongs to the tubulin family. In terms of assembly, found in a complex with TEDC1, TEDC2, TUBE1 and TUBD1.

The protein localises to the nucleus. Its subcellular location is the cytoplasm. It localises to the cytoskeleton. It is found in the microtubule organizing center. The protein resides in the centrosome. The protein localises to the centriole. Its subcellular location is the cell projection. It localises to the cilium. Functionally, acts as a positive regulator of hedgehog signaling and regulates ciliary function. In Canis lupus familiaris (Dog), this protein is Tubulin delta chain (TUBD1).